Reading from the N-terminus, the 632-residue chain is 1-deoxy-D-xylulose-5-phosphate synthase (632 aa).

Thiamine diphosphate contacts are provided by residues His77 and 118–120; that span reads GHA. Asp149 contacts Mg(2+). Residues 150–151, Asn178, Phe287, and Glu372 contribute to the thiamine diphosphate site; that span reads GS. Asn178 serves as a coordination point for Mg(2+).

This sequence belongs to the transketolase family. DXPS subfamily. Homodimer. Requires Mg(2+) as cofactor. Thiamine diphosphate serves as cofactor.

The enzyme catalyses D-glyceraldehyde 3-phosphate + pyruvate + H(+) = 1-deoxy-D-xylulose 5-phosphate + CO2. The protein operates within metabolic intermediate biosynthesis; 1-deoxy-D-xylulose 5-phosphate biosynthesis; 1-deoxy-D-xylulose 5-phosphate from D-glyceraldehyde 3-phosphate and pyruvate: step 1/1. Its function is as follows. Catalyzes the acyloin condensation reaction between C atoms 2 and 3 of pyruvate and glyceraldehyde 3-phosphate to yield 1-deoxy-D-xylulose-5-phosphate (DXP). The polypeptide is 1-deoxy-D-xylulose-5-phosphate synthase (Chlorobium luteolum (strain DSM 273 / BCRC 81028 / 2530) (Pelodictyon luteolum)).